A 202-amino-acid chain; its full sequence is 3-isopropylmalate dehydratase small subunit 1 (202 aa).

Belongs to the LeuD family. LeuD type 1 subfamily. Heterodimer of LeuC and LeuD.

It catalyses the reaction (2R,3S)-3-isopropylmalate = (2S)-2-isopropylmalate. The protein operates within amino-acid biosynthesis; L-leucine biosynthesis; L-leucine from 3-methyl-2-oxobutanoate: step 2/4. Catalyzes the isomerization between 2-isopropylmalate and 3-isopropylmalate, via the formation of 2-isopropylmaleate. The sequence is that of 3-isopropylmalate dehydratase small subunit 1 from Bordetella pertussis (strain Tohama I / ATCC BAA-589 / NCTC 13251).